The sequence spans 454 residues: Divalent metal cation transporter MntH (454 aa).

A disordered region spans residues 1 to 21 (MSDAEATAPRSSWRFAGRDED). 11 helical membrane-spanning segments follow: residues 45–65 (LFAF…PGNW), 78–98 (TLLF…ALAA), 122–142 (FVLW…EVIG), 153–173 (IPLI…LLLM), 182–202 (AFVI…IFVA), 220–240 (IVTN…TVMP), 275–295 (IALM…AVAF), 312–332 (LLSP…ALLA), 368–388 (GLAI…GTGQ), 389–409 (LLVF…VPLV), and 426–446 (GVAA…FKLL).

Belongs to the NRAMP family.

It localises to the cell inner membrane. Its function is as follows. H(+)-stimulated, divalent metal cation uptake system. In Mesorhizobium japonicum (strain LMG 29417 / CECT 9101 / MAFF 303099) (Mesorhizobium loti (strain MAFF 303099)), this protein is Divalent metal cation transporter MntH.